The sequence spans 483 residues: Altronate oxidoreductase (483 aa).

Residue 18-29 participates in NAD(+) binding; it reads IIQFGEGNFLRA.

Belongs to the mannitol dehydrogenase family. UxaB subfamily.

It carries out the reaction D-altronate + NAD(+) = keto-D-tagaturonate + NADH + H(+). It functions in the pathway carbohydrate metabolism; pentose and glucuronate interconversion. In Shigella flexneri serotype 5b (strain 8401), this protein is Altronate oxidoreductase.